A 146-amino-acid polypeptide reads, in one-letter code: uncharacterized protein (146 aa).

Transmembrane regions (helical) follow at residues 5 to 27, 32 to 49, 61 to 80, 90 to 108, and 120 to 142; these read GAMV…YGLA, FVYV…YIIL, LAVM…FFSG, SLGL…ARVF, and FFLK…MLFL.

It is found in the cell membrane. This is an uncharacterized protein from Archaeoglobus fulgidus (strain ATCC 49558 / DSM 4304 / JCM 9628 / NBRC 100126 / VC-16).